Reading from the N-terminus, the 377-residue chain is Erythronate-4-phosphate dehydrogenase (377 aa).

The substrate site is built by serine 45 and threonine 67. NAD(+) is bound by residues glutamine 127–valine 128, aspartate 147, and threonine 176. Arginine 209 is an active-site residue. Residue aspartate 233 participates in NAD(+) binding. Glutamate 238 is an active-site residue. Histidine 255 serves as the catalytic Proton donor. Glycine 258 is a binding site for NAD(+). Tyrosine 259 provides a ligand contact to substrate.

It belongs to the D-isomer specific 2-hydroxyacid dehydrogenase family. PdxB subfamily. Homodimer.

It is found in the cytoplasm. The enzyme catalyses 4-phospho-D-erythronate + NAD(+) = (R)-3-hydroxy-2-oxo-4-phosphooxybutanoate + NADH + H(+). The protein operates within cofactor biosynthesis; pyridoxine 5'-phosphate biosynthesis; pyridoxine 5'-phosphate from D-erythrose 4-phosphate: step 2/5. Its function is as follows. Catalyzes the oxidation of erythronate-4-phosphate to 3-hydroxy-2-oxo-4-phosphonooxybutanoate. This is Erythronate-4-phosphate dehydrogenase from Vibrio vulnificus (strain CMCP6).